The chain runs to 132 residues: MRLPLQLSILTLAWVWAVALEIPMSAVVKETLIQLSTHRALLTSNETVRLPVPTHKNHQLCIGEIFQGLDILKNQTARGGAVETLFQNLSLIKKYIDRQKEKCGEERRRARQFLDYLQEFLGVMSTEWTMEG.

Residues 1 to 17 (MRLPLQLSILTLAWVWA) form the signal peptide. N-linked (GlcNAc...) asparagine glycosylation is found at Asn45, Asn74, and Asn88.

It belongs to the IL-5 family. In terms of assembly, homodimer; disulfide-linked. Interacts with IL5RA. Interacts with CSF2RB.

It localises to the secreted. Its function is as follows. Homodimeric cytokine expressed predominantly by T-lymphocytes and NK cells that plays an important role in the survival, differentiation, and chemotaxis of eosinophils. Also acts on activated and resting B-cells to induce immunoglobulin production, growth, and differentiation. Mechanistically, exerts its biological effects through a receptor composed of IL5RA subunit and the cytokine receptor common subunit beta/CSF2RB. Binding to the receptor leads to activation of various kinases including LYN, SYK and JAK2 and thereby propagates signals through the RAS-MAPK and JAK-STAT5 pathways respectively. This is Interleukin-5 (IL5) from Meriones unguiculatus (Mongolian jird).